A 280-amino-acid polypeptide reads, in one-letter code: Succinate dehydrogenase [ubiquinone] iron-sulfur subunit, mitochondrial (280 aa).

Residues methionine 1–glycine 28 constitute a mitochondrion transit peptide. The 92-residue stretch at lysine 40–proline 131 folds into the 2Fe-2S ferredoxin-type domain. N6-acetyllysine is present on residues lysine 51 and lysine 55. Residues cysteine 93, cysteine 98, cysteine 101, and cysteine 113 each contribute to the [2Fe-2S] cluster site. Residues phenylalanine 146–tryptophan 218 are interaction with SDHAF1. Residues glutamate 176–tyrosine 206 enclose the 4Fe-4S ferredoxin-type domain. Positions 186, 189, and 192 each coordinate [4Fe-4S] cluster. Residue cysteine 196 participates in [3Fe-4S] cluster binding. Position 201 (tryptophan 201) interacts with a ubiquinone. The [3Fe-4S] cluster site is built by cysteine 243 and cysteine 249. Position 253 (cysteine 253) interacts with [4Fe-4S] cluster.

The protein belongs to the succinate dehydrogenase/fumarate reductase iron-sulfur protein family. As to quaternary structure, component of complex II composed of four subunits: the flavoprotein (FP) SDHA, iron-sulfur protein (IP) SDHB, and a cytochrome b560 composed of SDHC and SDHD. Interacts with SDHAF1; the interaction is required for iron-sulfur cluster incorporation into SDHB. The cofactor is [2Fe-2S] cluster. [3Fe-4S] cluster is required as a cofactor. It depends on [4Fe-4S] cluster as a cofactor.

Its subcellular location is the mitochondrion inner membrane. It catalyses the reaction a quinone + succinate = fumarate + a quinol. The catalysed reaction is (R)-malate + a quinone = enol-oxaloacetate + a quinol. It carries out the reaction (S)-malate + a quinone = enol-oxaloacetate + a quinol. Its pathway is carbohydrate metabolism; tricarboxylic acid cycle; fumarate from succinate (eukaryal route): step 1/1. Its activity is regulated as follows. Enol-oxaloacetate inhibits the succinate dehydrogenase activity. Functionally, iron-sulfur protein (IP) subunit of the succinate dehydrogenase complex (mitochondrial respiratory chain complex II), responsible for transferring electrons from succinate to ubiquinone (coenzyme Q). SDH also oxidizes malate to the non-canonical enol form of oxaloacetate, enol-oxaloacetate. Enol-oxaloacetate, which is a potent inhibitor of the succinate dehydrogenase activity, is further isomerized into keto-oxaloacetate. The polypeptide is Succinate dehydrogenase [ubiquinone] iron-sulfur subunit, mitochondrial (SDHB) (Sus scrofa (Pig)).